We begin with the raw amino-acid sequence, 352 residues long: Small glutamine-rich tetratricopeptide repeat-containing protein 2 (352 aa).

Low complexity predominate over residues 80 to 97 (PAAASSSSTAPAAAAATP). The tract at residues 80–103 (PAAASSSSTAPAAAAATPSDEDLA) is disordered. TPR repeat units lie at residues 105–138 (AEQLKAEGNKAMSAKDYGAAIEAYGKAIELNPNS), 140–172 (VYFSNRAAAFSQIGQHDSAIDDAKQASKIDPKF), and 173–206 (GKAYSRLGHALFSSGRYQEAVEAYQKGVEVDPSN). A disordered region spans residues 217-236 (KEQLSSSSSSNANDATASRG).

The protein belongs to the SGT family.

Its function is as follows. Co-chaperone that binds to the molecular chaperone Hsp70 and regulates Hsp70 ATPase activity. This chain is Small glutamine-rich tetratricopeptide repeat-containing protein 2, found in Mycosarcoma maydis (Corn smut fungus).